The primary structure comprises 212 residues: 3-isopropylmalate dehydratase small subunit (212 aa).

This sequence belongs to the LeuD family. LeuD type 1 subfamily. Heterodimer of LeuC and LeuD.

It carries out the reaction (2R,3S)-3-isopropylmalate = (2S)-2-isopropylmalate. It functions in the pathway amino-acid biosynthesis; L-leucine biosynthesis; L-leucine from 3-methyl-2-oxobutanoate: step 2/4. In terms of biological role, catalyzes the isomerization between 2-isopropylmalate and 3-isopropylmalate, via the formation of 2-isopropylmaleate. This chain is 3-isopropylmalate dehydratase small subunit, found in Dechloromonas aromatica (strain RCB).